Consider the following 370-residue polypeptide: MTFFTRCFRRGALLFLLAVLLLPSPAQAVRIKDIASFGGVRDNDLMGYGLVVGLGGTGDKKSSTFTISSMVNMLDKMGIAVDRTKLTPKNVAAVMVTTRMPVSARPGSRLDITVSSLGDATSLLGGVLLMTPMKGVDGKVYALAQGPLALGGFSAEGDAARAQKNITTVGRIPGGAVVERAVPFEFNTQNKLTLHMNVQDFSTTMQVVDRLNDNMGGQFASARDIATVDIMVPPAYRGNLVPLMASLENLPVTPDSPARVVVDEKTGTVVVGNSVRISKVAVSHGNLQIVVQENPQVSQPGAFSPGQTVVTPQTDIAAQEENRRLVMMEGATLQELVDGLNSIGATPRDLISILRTLKAAGALHAELEVI.

A signal peptide spans 1-28 (MTFFTRCFRRGALLFLLAVLLLPSPAQA).

This sequence belongs to the FlgI family. In terms of assembly, the basal body constitutes a major portion of the flagellar organelle and consists of four rings (L,P,S, and M) mounted on a central rod.

It localises to the periplasm. Its subcellular location is the bacterial flagellum basal body. In terms of biological role, assembles around the rod to form the L-ring and probably protects the motor/basal body from shearing forces during rotation. In Oleidesulfovibrio alaskensis (strain ATCC BAA-1058 / DSM 17464 / G20) (Desulfovibrio alaskensis), this protein is Flagellar P-ring protein.